A 91-amino-acid polypeptide reads, in one-letter code: Small ribosomal subunit protein uS19 (91 aa).

The protein belongs to the universal ribosomal protein uS19 family.

Functionally, protein S19 forms a complex with S13 that binds strongly to the 16S ribosomal RNA. The sequence is that of Small ribosomal subunit protein uS19 from Prochlorococcus marinus (strain MIT 9515).